A 94-amino-acid chain; its full sequence is uncharacterized protein (94 aa).

This is an uncharacterized protein from Rickettsia prowazekii (strain Madrid E).